Reading from the N-terminus, the 158-residue chain is Transcription elongation factor GreB (158 aa).

This sequence belongs to the GreA/GreB family. GreB subfamily.

Functionally, necessary for efficient RNA polymerase transcription elongation past template-encoded arresting sites. The arresting sites in DNA have the property of trapping a certain fraction of elongating RNA polymerases that pass through, resulting in locked ternary complexes. Cleavage of the nascent transcript by cleavage factors such as GreA or GreB allows the resumption of elongation from the new 3'terminus. GreB releases sequences of up to 9 nucleotides in length. The polypeptide is Transcription elongation factor GreB (Escherichia coli O157:H7).